We begin with the raw amino-acid sequence, 329 residues long: NAD(+) hydrolase TcpA (329 aa).

An MPN domain is found at 5–134 (VSISYLALEQ…ADCVRFYTVR (130 aa)). The 133-residue stretch at 192 to 324 (FEYDVFICHA…YVVNEILRVL (133 aa)) folds into the TIR domain. NAD(+) is bound by residues 201-202 (AH) and Ser-231. Residue Glu-267 is part of the active site.

The enzyme catalyses NAD(+) + H2O = ADP-D-ribose + nicotinamide + H(+). In terms of biological role, NAD(+) hydrolase (NADase) that catalyzes cleavage of NAD(+) into ADP-D-ribose (ADPR) and nicotinamide. This is NAD(+) hydrolase TcpA from Theionarchaea archaeon (strain DG-70-1).